The chain runs to 285 residues: Urease accessory protein UreD (285 aa).

This sequence belongs to the UreD family. UreD, UreF and UreG form a complex that acts as a GTP-hydrolysis-dependent molecular chaperone, activating the urease apoprotein by helping to assemble the nickel containing metallocenter of UreC. The UreE protein probably delivers the nickel.

It localises to the cytoplasm. Functionally, required for maturation of urease via the functional incorporation of the urease nickel metallocenter. The protein is Urease accessory protein UreD of Azoarcus sp. (strain BH72).